The following is a 443-amino-acid chain: Crinkler effector protein 161 (443 aa).

The signal sequence occupies residues 1 to 17 (MVKLSCVIVGVPGDPFQ). The tract at residues 18–56 (VEIDEICELVAGLKDAIKKEKPDSIKCDADKLQLFKAAK) is LQLFLAK domain. The interval 57 to 126 (EDRTFSASGA…GMESPSISQI (70 aa)) is DWL domain. The HVLVXXP motif motif lies at 127–133 (HVLVVLP). The tract at residues 134-439 (EDSESEGGTS…RSMPGYCCAN (306 aa)) is effector domain. Short sequence motifs (nuclear localization signal) lie at residues 161–170 (ADKKRKRYWH) and 384–393 (HQPLKRLKLS).

It belongs to the Crinkler effector family.

It is found in the secreted. It localises to the host nucleus. Secreted effector that exhibits strong cell death suppression activity and suppresses cell death induced by a variety of effectors including CRN63, Avh241 and Avr3a. Protects host plants from biotic and abiotic stresses such as salinity and drought by up-regulation of many defense-related genes, including ABC transporters, Cytochrome P450 monooxygenases and receptor-like kinases (RLKs). Also enhances resistance to Phytophtora pathogens. This chain is Crinkler effector protein 161, found in Phytophthora sojae (strain P6497) (Soybean stem and root rot agent).